Reading from the N-terminus, the 349-residue chain is MADKMFKALLWAFATAVVMAEAVRGQLVPCYFVFGDSVFDNGNNNELDTLAKVNYSPYGIDFARGPTGRFSNGRNIPDFIAEELRISYDIPPFTRASTEQAHTGINYASGGAGLLEETSQHLGERISFEKQITNHRKMIMTAGVPPEKLKKCLYTINIGSNDYLNNYFMPAPYTTNENFSFDEYADFLIQSYRSYLKSLYVLGARKVAVFGVSKLGCTPRMIASHGGGKGCATEVNKAVEPFNKKLKDLISEFNRISVVDHAKFTFVDLFSSQNPIEYFILGFTVTDKSCCTVESGQELCAANKPVCPNRERYVYWDNVHSTEAANKVVVKAAFAGLITSPISILLLVL.

Residues 1 to 25 form the signal peptide; the sequence is MADKMFKALLWAFATAVVMAEAVRG. The active-site Nucleophile is Ser37. An N-linked (GlcNAc...) asparagine glycan is attached at Asn178. Active-site residues include Asp317 and His320.

The protein belongs to the 'GDSL' lipolytic enzyme family.

It localises to the secreted. The protein is GDSL esterase/lipase At2g19060 of Arabidopsis thaliana (Mouse-ear cress).